Reading from the N-terminus, the 430-residue chain is Gamma-glutamyl phosphate reductase (430 aa).

It belongs to the gamma-glutamyl phosphate reductase family.

Its subcellular location is the cytoplasm. It carries out the reaction L-glutamate 5-semialdehyde + phosphate + NADP(+) = L-glutamyl 5-phosphate + NADPH + H(+). It functions in the pathway amino-acid biosynthesis; L-proline biosynthesis; L-glutamate 5-semialdehyde from L-glutamate: step 2/2. Its function is as follows. Catalyzes the NADPH-dependent reduction of L-glutamate 5-phosphate into L-glutamate 5-semialdehyde and phosphate. The product spontaneously undergoes cyclization to form 1-pyrroline-5-carboxylate. This chain is Gamma-glutamyl phosphate reductase, found in Polaromonas naphthalenivorans (strain CJ2).